We begin with the raw amino-acid sequence, 545 residues long: CTP synthase (545 aa).

The segment at 1-266 (MTTRYIFVTG…DDLVVKRFGL (266 aa)) is amidoligase domain. Ser14 provides a ligand contact to CTP. Residue Ser14 coordinates UTP. ATP is bound by residues 15–20 (SLGKGI) and Asp72. Positions 72 and 140 each coordinate Mg(2+). CTP-binding positions include 147 to 149 (DIE), 187 to 192 (KTKPTQ), and Lys223. UTP is bound by residues 187-192 (KTKPTQ) and Lys223. 239–241 (KDV) contacts ATP. Residues 291 to 542 (VIGMVGKYIE…IAAASAHQKR (252 aa)) enclose the Glutamine amidotransferase type-1 domain. Gly352 is a binding site for L-glutamine. Cys379 acts as the Nucleophile; for glutamine hydrolysis in catalysis. Residues 380–383 (LGMQ), Glu403, and Arg470 contribute to the L-glutamine site. Catalysis depends on residues His515 and Glu517.

This sequence belongs to the CTP synthase family. Homotetramer.

The catalysed reaction is UTP + L-glutamine + ATP + H2O = CTP + L-glutamate + ADP + phosphate + 2 H(+). It catalyses the reaction L-glutamine + H2O = L-glutamate + NH4(+). The enzyme catalyses UTP + NH4(+) + ATP = CTP + ADP + phosphate + 2 H(+). Its pathway is pyrimidine metabolism; CTP biosynthesis via de novo pathway; CTP from UDP: step 2/2. Its activity is regulated as follows. Allosterically activated by GTP, when glutamine is the substrate; GTP has no effect on the reaction when ammonia is the substrate. The allosteric effector GTP functions by stabilizing the protein conformation that binds the tetrahedral intermediate(s) formed during glutamine hydrolysis. Inhibited by the product CTP, via allosteric rather than competitive inhibition. Its function is as follows. Catalyzes the ATP-dependent amination of UTP to CTP with either L-glutamine or ammonia as the source of nitrogen. Regulates intracellular CTP levels through interactions with the four ribonucleotide triphosphates. In Shewanella baltica (strain OS155 / ATCC BAA-1091), this protein is CTP synthase.